The chain runs to 615 residues: Protein translocase subunit SecD (615 aa).

6 helical membrane passes run 10–30 (YIML…NLYG), 452–472 (QGLE…IFFY), 477–497 (LIAT…MSLL), 504–524 (MPGI…NVLI), 546–568 (YAGA…IILY), and 585–605 (GVAT…NLLY).

Belongs to the SecD/SecF family. SecD subfamily. In terms of assembly, forms a complex with SecF. Part of the essential Sec protein translocation apparatus which comprises SecA, SecYEG and auxiliary proteins SecDF-YajC and YidC.

The protein resides in the cell inner membrane. Part of the Sec protein translocase complex. Interacts with the SecYEG preprotein conducting channel. SecDF uses the proton motive force (PMF) to complete protein translocation after the ATP-dependent function of SecA. This Salmonella choleraesuis (strain SC-B67) protein is Protein translocase subunit SecD.